The following is a 649-amino-acid chain: Transcription factor E2-alpha (649 aa).

Disordered stretches follow at residues 37-107, 132-207, 296-325, and 339-376; these read RPAS…SERN, GLSS…AKTP, TYSGTSGHTPPVSGADSLLGTRGTTASSSG, and DHSSNNFSPSPSTPVGSPQGLPGTSQWPRAGAPSALSP. Residues 57–71 show a composition bias toward polar residues; that stretch reads SESWGNSEQNSSSFD. Low complexity predominate over residues 132–148; the sequence is GLSSPGPLSPSGVKSSS. Ser135 and Ser140 each carry phosphoserine. The short motif at 171–177 is the Nuclear localization signal element; it reads PKKVRKV. Residues 339–352 show a composition bias toward low complexity; the sequence is DHSSNNFSPSPSTP. Thr351 is subject to Phosphothreonine. The residue at position 355 (Ser355) is a Phosphoserine. Position 367 is an omega-N-methylarginine (Arg367). Ser375 is subject to Phosphoserine. The leucine-zipper stretch occupies residues 385 to 420; the sequence is LSKMEDRLDEAIHVLRSHAVGTASELHGLLPGHSTL. The segment at 435-547 is disordered; the sequence is AGLVSGSHPE…KAEREKERRV (113 aa). The span at 459–477 shows a compositional bias: low complexity; the sequence is SLPSQPSSLPDLSQRPPDS. Residue Lys494 forms a Glycyl lysine isopeptide (Lys-Gly) (interchain with G-Cter in SUMO2) linkage. Ser524 bears the Phosphoserine mark. Asp526 is subject to Phosphothreonine. The segment covering 537–547 has biased composition (basic and acidic residues); it reads QKAEREKERRV. The bHLH domain maps to 544–597; it reads ERRVANNARERLRVRDINEAFKELGRMCQLHLSTEKPQTKLLILHQAVAVILSL. Residue Lys620 forms a Glycyl lysine isopeptide (Lys-Gly) (interchain with G-Cter in SUMO2) linkage.

In terms of assembly, homodimer. Heterodimer; efficient DNA binding requires dimerization with another bHLH protein. Forms a heterodimer with TWIST1 and TWIST2. Forms a heterodimer with NEUROD1; the heterodimer is inhibited in presence of ID2, but not NR0B2, to E-box element. Forms a heterodimer with TCF15; the heterodimer binds E-box element. Forms a heterodimer with MYOG; heterodimerization enhances MYOG DNA-binding and transcriptional activities. Forms a heterodimer with ATOH8; repress transcription of TCF3 and TCF3-NEUROG3 dimer-induced transactivation of E box-dependent promoters. Component of a nuclear TAL-1 complex composed at least of CBFA2T3, LDB1, TAL1 and TCF3. Interacts with NEUROD2. Interacts with EP300. Interacts with PTF1A, TGFB1I1. Interacts with UBE2I. Interacts with BHLHA9. Interacts with ASB2; the interaction is mediated by SKP2 and targets TCF3 for Notch-induced proteasomal degradation. Interacts with transcription factor ASCL5/AmeloD. Interacts with RALGAPA1. Interacts with FIGLA. As to quaternary structure, forms a heterodimer with ATOH7; required for ATOH7 DNA-binding. Phosphorylated following NGF stimulation. Post-translationally, undergoes Notch-induced ubiquitination and subsequent proteasomal degradation which is mediated by ASB1 or ASB2, the substrate-recognition components of probable ECS E3 ubiquitin-protein ligase complexes.

The protein localises to the nucleus. In terms of biological role, transcriptional regulator involved in the initiation of neuronal differentiation and mesenchymal to epithelial transition. Heterodimers between TCF3 and tissue-specific basic helix-loop-helix (bHLH) proteins play major roles in determining tissue-specific cell fate during embryogenesis, like muscle or early B-cell differentiation. Together with TCF15, required for the mesenchymal to epithelial transition. Dimers bind DNA on E-box motifs: 5'-CANNTG-3'. Binds to the kappa-E2 site in the kappa immunoglobulin gene enhancer. Binds to the consensus sequence CAC/GCTGT/C present, in the chymotrypsin, insulin, AP-4, and several other gene enhancer motifs. Its function is as follows. Facilitates ATOH7 binding to DNA at the consensus sequence 5'-CAGGTG-3', and positively regulates transcriptional activity. The polypeptide is Transcription factor E2-alpha (Tcf3) (Rattus norvegicus (Rat)).